The following is a 73-amino-acid chain: Large ribosomal subunit protein bL31 (73 aa).

The protein belongs to the bacterial ribosomal protein bL31 family. Type A subfamily. In terms of assembly, part of the 50S ribosomal subunit.

Binds the 23S rRNA. The chain is Large ribosomal subunit protein bL31 (rpmE) from Roseobacter denitrificans (strain ATCC 33942 / OCh 114) (Erythrobacter sp. (strain OCh 114)).